The following is a 1043-amino-acid chain: NACHT, LRR and PYD domains-containing protein 13 (1043 aa).

The Pyrin domain maps to 1 to 107 (MNFSVITCPN…CEKVRAEMKE (107 aa)). One can recognise an NACHT domain in the interval 229–558 (QTIVLVGRAG…VLEEPREFPP (330 aa)). Residue 235–242 (GRAGVGKT) participates in ATP binding. LRR repeat units lie at residues 725 to 749 (NENL…LCLA), 781 to 804 (NSKL…ILKA), 837 to 864 (IQHV…ALTH), 894 to 917 (NRSL…FLCE), 923 to 946 (DGNL…ELAN), 951 to 978 (NHNV…ALKP), and 1007 to 1030 (SKSL…MLCK).

This sequence belongs to the NLRP family.

In terms of biological role, involved in inflammation. The sequence is that of NACHT, LRR and PYD domains-containing protein 13 (NLRP13) from Homo sapiens (Human).